An 881-amino-acid polypeptide reads, in one-letter code: Actin-like protein ARP8 (881 aa).

The interval 1–150 (MSQEEAESSI…DPAKAPPGKK (150 aa)) is disordered. 2 stretches are compositionally biased toward acidic residues: residues 14 to 33 (EPID…EEEN) and 44 to 54 (ENAENESDDSV). Residues serine 65 and serine 70 each carry the phosphoserine modification. Over residues 77–114 (ADEEDEDEEGEDEDEDEDDNDVDNEDENDNDNANENEN) the composition is skewed to acidic residues. 502–505 (NIGA) contributes to the ATP binding site.

It belongs to the actin family. As to quaternary structure, component of the chromatin-remodeling INO80 complex, at least composed of ARP4, ARP5, ARP8, RVB1, RVB2, TAF14, NHP10, IES1, IES3, IES4, IES6, ACT1, IES2, IES5 and INO80. Exists as monomers and dimers, but the dimer is most probably the biologically relevant form required for stable interactions with histones that exploits the twofold symmetry of the nucleosome core.

Its subcellular location is the nucleus. The protein localises to the cytoplasm. The protein resides in the cytoskeleton. Its function is as follows. Probably involved in transcription regulation via its interaction with the INO80 complex, a chromatin remodeling complex. Exhibits low basal ATPase activity, and unable to polymerize. Strongly prefer nucleosomes and H3-H4 tetramers over H2A-H2B dimers, suggesting it may act as a nucleosome recognition module within the complex. This is Actin-like protein ARP8 (ARP8) from Saccharomyces cerevisiae (strain ATCC 204508 / S288c) (Baker's yeast).